The primary structure comprises 811 residues: Exocyst complex component 6B (811 aa).

Positions 50–119 (MEKLETRIRN…LVIAMEELKQ (70 aa)) form a coiled coil. The disordered stretch occupies residues 260–280 (STSPKSEQDSGILDVEDEEDD).

The protein belongs to the SEC15 family. The exocyst complex is composed of SEC3, SEC5, SEC6, SEC8, SEC10, SEC15, EXO70 and EXO84.

Functionally, component of the exocyst complex involved in the docking of exocytic vesicles with fusion sites on the plasma membrane. In Homo sapiens (Human), this protein is Exocyst complex component 6B (EXOC6B).